The sequence spans 281 residues: Protein-S-isoprenylcysteine O-methyltransferase (281 aa).

Over 1–2 (ML) the chain is Cytoplasmic. Residues 3 to 29 (SPAGKISLQSFTGSSLVFFVICMFNHY) traverse the membrane as a helical segment. Residues 30 to 35 (YGITNL) lie on the Lumenal side of the membrane. The helical transmembrane segment at 36–53 (VVNTLIVFFYAVNVYFFL) threads the bilayer. The Cytoplasmic portion of the chain corresponds to 54 to 58 (KFFYN). The chain crosses the membrane as a helical span at residues 59 to 85 (EFAFAIAIRAAFLGLVLVLGLYIKLVA). The Lumenal portion of the chain corresponds to 86-88 (PPN). The chain crosses the membrane as a helical span at residues 89–113 (IQIFGGYMSVMALFHYSEFLAIAIV). At 114-118 (QPKQV) the chain is on the cytoplasmic side. Residues 119-149 (STDSFVINHSPQYTIAAVSSWVEFFIETYFF) form a helical membrane-spanning segment. Topologically, residues 150-155 (PGLKEI) are lumenal. Residues 156-181 (HWLSNIGLCVCILGEVLRKTAILTAG) form a helical membrane-spanning segment. Residues 182–208 (SNFNHLVQCEKSSDHVLVTHGVYAWFR) are Cytoplasmic-facing. S-adenosyl-L-methionine is bound by residues Gln189, 196–199 (HVLV), Tyr204, and 209–212 (HPSY). The helical transmembrane segment at 209-226 (HPSYVGWFYWSIGTQIIL) threads the bilayer. The Lumenal portion of the chain corresponds to 227–229 (INP). Residues 230-243 (LCIPAYTLASWMFF) form a helical membrane-spanning segment. The Cytoplasmic portion of the chain corresponds to 244–281 (KERIYIEESMLLSFFGQQYCDYQQQVGTGIPFIEGYKI). Arg246 contacts substrate. Glu250 contributes to the S-adenosyl-L-methionine binding site.

The protein belongs to the class VI-like SAM-binding methyltransferase superfamily. Isoprenylcysteine carboxyl methyltransferase family.

It localises to the endoplasmic reticulum membrane. The catalysed reaction is [protein]-C-terminal S-[(2E,6E)-farnesyl]-L-cysteine + S-adenosyl-L-methionine = [protein]-C-terminal S-[(2E,6E)-farnesyl]-L-cysteine methyl ester + S-adenosyl-L-homocysteine. Its function is as follows. Catalyzes the post-translational methylation of isoprenylated C-terminal cysteine residues. The sequence is that of Protein-S-isoprenylcysteine O-methyltransferase from Tribolium castaneum (Red flour beetle).